The chain runs to 123 residues: Large ribosomal subunit protein bL12 (123 aa).

The protein belongs to the bacterial ribosomal protein bL12 family. As to quaternary structure, homodimer. Part of the ribosomal stalk of the 50S ribosomal subunit. Forms a multimeric L10(L12)X complex, where L10 forms an elongated spine to which 2 to 4 L12 dimers bind in a sequential fashion. Binds GTP-bound translation factors.

In terms of biological role, forms part of the ribosomal stalk which helps the ribosome interact with GTP-bound translation factors. Is thus essential for accurate translation. This Shewanella amazonensis (strain ATCC BAA-1098 / SB2B) protein is Large ribosomal subunit protein bL12.